Here is a 340-residue protein sequence, read N- to C-terminus: GTP 3',8-cyclase (340 aa).

A Radical SAM core domain is found at 8–227; sequence KLGRPIRDLR…TMIEQHFEID (220 aa). Arginine 17 is a GTP binding site. The [4Fe-4S] cluster site is built by cysteine 24 and cysteine 28. Tyrosine 30 is a binding site for S-adenosyl-L-methionine. Cysteine 31 is a binding site for [4Fe-4S] cluster. A GTP-binding site is contributed by arginine 71. Glycine 75 provides a ligand contact to S-adenosyl-L-methionine. Position 102 (threonine 102) interacts with GTP. Serine 126 provides a ligand contact to S-adenosyl-L-methionine. Lysine 163 is a GTP binding site. An S-adenosyl-L-methionine-binding site is contributed by methionine 197. Residues cysteine 261 and cysteine 264 each contribute to the [4Fe-4S] cluster site. 266–268 is a GTP binding site; that stretch reads RAR. Residue cysteine 278 coordinates [4Fe-4S] cluster.

Belongs to the radical SAM superfamily. MoaA family. In terms of assembly, monomer and homodimer. It depends on [4Fe-4S] cluster as a cofactor.

The catalysed reaction is GTP + AH2 + S-adenosyl-L-methionine = (8S)-3',8-cyclo-7,8-dihydroguanosine 5'-triphosphate + 5'-deoxyadenosine + L-methionine + A + H(+). It participates in cofactor biosynthesis; molybdopterin biosynthesis. In terms of biological role, catalyzes the cyclization of GTP to (8S)-3',8-cyclo-7,8-dihydroguanosine 5'-triphosphate. The polypeptide is GTP 3',8-cyclase (Staphylococcus aureus (strain USA300)).